The primary structure comprises 257 residues: Movement protein (257 aa).

Residues 212-257 form a disordered region; the sequence is NQSKKGSNKYVGKRNDNKGLNKEGKLFDKVRIGQNSESSDAESSSF. Residues 224–242 are compositionally biased toward basic and acidic residues; that stretch reads KRNDNKGLNKEGKLFDKVR. Low complexity predominate over residues 247 to 257; it reads SESSDAESSSF.

Belongs to the tobamovirus movement protein family.

The protein resides in the host cytoplasm. It localises to the host cytoskeleton. It is found in the host cell junction. The protein localises to the host plasmodesma. Transports viral genome to neighboring plant cells directly through plasmosdesmata, without any budding. The movement protein allows efficient cell to cell propagation, by bypassing the host cell wall barrier. Forms a ribonucleoprotein complex with viral RNA. Binds microtubules and modulates microtubule stability. Can bind double-stranded DNA. In Vicia faba (Broad bean), this protein is Movement protein (MP).